An 88-amino-acid polypeptide reads, in one-letter code: Small ribosomal subunit protein bS20 (88 aa).

The protein belongs to the bacterial ribosomal protein bS20 family.

Binds directly to 16S ribosomal RNA. This Natranaerobius thermophilus (strain ATCC BAA-1301 / DSM 18059 / JW/NM-WN-LF) protein is Small ribosomal subunit protein bS20.